A 586-amino-acid chain; its full sequence is Madf and zinc finger protein 1 (586 aa).

The interval 161 to 194 (FMSEDDLAPPRKPGRPPRRTRPGQVFKFKVSFIR) is involved in interaction with Cp190. The MADF 1 DNA-binding region spans 201–292 (HLIQAYKEHP…KCEFLSVAPV (92 aa)). Residues 294 to 319 (TPRENEEDNDLTAIKLNFKEENLITT) form an involved in interaction with Cp190 region. The MADF 2 DNA-binding region spans 320–413 (SFIETYANYP…MCSFLPAKGS (94 aa)). C2H2-type zinc fingers lie at residues 418–441 (LYCD…VKAH), 448–471 (YLCS…LRSH), 476–498 (LKCQ…TLIH), 504–527 (HVCD…NGVH), 533–555 (YSCN…IKGH), and 561–583 (KKCE…RRSH).

In terms of assembly, interacts (via regions flanking MADF domain 1) with Cp190 (via regions between the BTB domain and first zinc finger domain); the interaction is probably direct and is essential for protein function.

It is found in the nucleus. The protein localises to the chromosome. It localises to the nucleoplasm. In terms of biological role, chromatin-binding protein involved in the organization of active promoters and insulators. Essential for the activity of heterochromatin promoters; primarily binds to specific motifs within promoters of housekeeping genes. May also associate to a lesser extent with promoters in euchromatin. Mediates recruitment of Cp190, a multifunctional protein involved in the recruitment of transcription complexes, the creation of open chromatin regions and the activity of insulators. Cooperates with pita and su(Hw) to recruit Cp190 and regulate insulator function at the front-ultraabdominal (Fub) boundary. May cooperate with other C2H2 zinc finger proteins, such as M1BP, to recruit CP190 to promoters. May be involved in cellular organization and development of the eye. In Drosophila melanogaster (Fruit fly), this protein is Madf and zinc finger protein 1.